A 318-amino-acid chain; its full sequence is Trans-prenyltransferase (318 aa).

The chain crosses the membrane as a helical span at residues 1–21 (MLHLIYISIIVVLIIILISYT). Residues lysine 85, arginine 88, and histidine 122 each contribute to the isopentenyl diphosphate site. 2 residues coordinate Mg(2+): aspartate 129 and aspartate 135. Arginine 140 is a binding site for dimethylallyl diphosphate. Arginine 141 is a binding site for isopentenyl diphosphate. Lysine 216, threonine 217, and glutamine 254 together coordinate dimethylallyl diphosphate.

It belongs to the FPP/GGPP synthase family. Asfivirus trans-prenyltransferase subfamily. It depends on Mg(2+) as a cofactor.

The protein localises to the host endoplasmic reticulum. It is found in the host membrane. It catalyses the reaction isopentenyl diphosphate + dimethylallyl diphosphate = (2E)-geranyl diphosphate + diphosphate. The catalysed reaction is isopentenyl diphosphate + (2E)-geranyl diphosphate = (2E,6E)-farnesyl diphosphate + diphosphate. It carries out the reaction isopentenyl diphosphate + (2E,6E)-farnesyl diphosphate = (2E,6E,10E)-geranylgeranyl diphosphate + diphosphate. The enzyme catalyses isopentenyl diphosphate + (2E,6E,10E)-geranylgeranyl diphosphate = (2E,6E,10E,14E)-geranylfarnesyl diphosphate + diphosphate. Its pathway is isoprenoid biosynthesis; farnesyl diphosphate biosynthesis; farnesyl diphosphate from geranyl diphosphate and isopentenyl diphosphate: step 1/1. It functions in the pathway isoprenoid biosynthesis; geranyl diphosphate biosynthesis; geranyl diphosphate from dimethylallyl diphosphate and isopentenyl diphosphate: step 1/1. It participates in isoprenoid biosynthesis; geranylgeranyl diphosphate biosynthesis; geranylgeranyl diphosphate from farnesyl diphosphate and isopentenyl diphosphate: step 1/1. Its function is as follows. Trans-prenyltransferase that catalyzes the sequential condensation of isopentenyl diphosphate (IPP) with different allylic diphosphates, such as dimethylallyl diphosphate (DMAPP), geranyl diphosphate (GPP), farnesyl diphosphate (FPP) and geranylgeranyl diphosphate (GGPP), farnesyl diphosphate being the best allylic substrate. The sequence is that of Trans-prenyltransferase from Ornithodoros (relapsing fever ticks).